The following is a 604-amino-acid chain: MCGIVGYVGFRNATDVLLDGLRRLEYRGYDSAGIAVRTPEGLKVVKRSGKLSALAQAVGKTPLQGALGIGHTRWATHGAPTDPNAHPHTTEDGRIALIHNGIFENYLELKEALEARGHRFRSETDTEVLAHLLEETYRGDLLEALREALKAVRGAYAVVVAHEDHEEIVAARTVSPLVVGLGEGENFLASDVPALLPYTRRVIFLHDGDVVRLTREGVEITDLEGRPVQREAVEVDWTLEAAEKGGFPHYMLKEIYEQPWVLENTLGGRLREEEGTVELGLALDPREVDRVHVIACGTASYAGLYGKYLLETLARLPTEWDVASEYRYRDPVVDSRTLALAISQSGETIDTLEGLREAKRKGARSLGVINAKGSTLTREVEDVLYIHAGPEIGVASTKAYTAMLVAMALLAVWFGRARGALALEEAQSLLREMRRLPRLVEEVLEKRPLVAHVAEKYHQARDFLFLGRHVQAPTAYEGALKLKEISYIHAEAYPAGEMKHGPIALIDEHLPVVVLATKGPLYEKTLSNIQEVRARGGKVIAIATEGDEEIPRLAQDVIYVPEVHPLLAPIVSVVPLQLLAYEIAVLLGRDVDQPRNLAKSVTVE.

Cysteine 2 acts as the Nucleophile; for GATase activity in catalysis. Positions 2–216 (CGIVGYVGFR…DGDVVRLTRE (215 aa)) constitute a Glutamine amidotransferase type-2 domain. 2 SIS domains span residues 281–420 (LALD…ARGA) and 453–594 (VAEK…VDQP). Lysine 599 functions as the For Fru-6P isomerization activity in the catalytic mechanism.

Homodimer.

Its subcellular location is the cytoplasm. The catalysed reaction is D-fructose 6-phosphate + L-glutamine = D-glucosamine 6-phosphate + L-glutamate. Its function is as follows. Catalyzes the first step in hexosamine metabolism, converting fructose-6P into glucosamine-6P using glutamine as a nitrogen source. This is Glutamine--fructose-6-phosphate aminotransferase [isomerizing] from Thermus thermophilus (strain ATCC BAA-163 / DSM 7039 / HB27).